A 129-amino-acid polypeptide reads, in one-letter code: Nif-specific regulatory protein (129 aa).

One can recognise a Sigma-54 factor interaction domain in the interval 1–46; that stretch reads EFLLTKIGRQQGRPLTVTDSAIRLLMSHRWPGNVRDVENCLERSAI. The H-T-H motif DNA-binding region spans 101–129; the sequence is QAKAARLLGMTPRQIAYRIQTLNIHMRKI.

As to quaternary structure, interacts with sigma-54.

Functionally, required for activation of most nif operons, which are directly involved in nitrogen fixation. This chain is Nif-specific regulatory protein (nifA), found in Azotobacter chroococcum mcd 1.